Here is a 2588-residue protein sequence, read N- to C-terminus: MSFKNNEKYMDEENDQESDDEFFKVKRKPQINVDAEEDEDNNNNNNNNNNNSNISNHMNEFDLEEEDEDDYEDENYIVGETIEIDESKLKNEKIEEDIFNENNLLHGIKTRELLEQEILILFSNMLKKETILCKDIKSGSNDPMDEISLFKDDMVDDKELKDFEKSSLKIKNKEVYNFIYNKMNLHIKENKKKDEKEKKNKIHNNDENNNMIYYKNIDKTHYILDNNVVHILNDINTYLKRERDYMNRKFGTYIDSTYKNPMYVTLYIFNNDILKDIILQVIDIIRNDFDHAIYKDIDENQLIKNLIILINHLTTRPSKEWFDYWKRHMPTFNDKKSEYNVYKYLQLQKSDRRILYDTLKNDIYIKELQKRSDILDQYQKGLQSLKCLLANKNFLTMLNEFRYNTQLFIDADYREIEENEKVMEMQRRENELLEEKKRLKQELESYHDDSSTDDDSSADEQQDERREVLTHNDPINKKDDPINKNDDPINKNDDPINKNDDNINKNDDNINKNDDNICNSNDHTHNSNDHTHNSNDHTHNSNDHTHNSNDHTHFSNDHTHFSNDHTHFSNDHTHFSNDHTHNSNDHTHNSKNHAHFSNEVDKTNDYKYHSEKKKKNNVIRSKMYNIKKRISKINDELHELSNFFLIDKTKREKLMFEYNENVFLVRNILTQVLGIRNKTDNRDINLNNVHYAILQNILDKHGCLHLIIDEMRDLFEKEIKKYEEESNIYIPYIKQNTMKQIWEYIRLFYNIICYIDPIDLVKSLTYQKSTHIIKKEKKKTKTDMDNNNNNNNNNNNDNNNIMMNQKFLNNYHNKKHLNTSDNVNNMKTNNLRNYNKDINLKNVGKDMNKRKSMAQQQNKRKSNYINIKQKNLMITHLSRINPLLAKSKVRKPNEEKHLKKRKRKFIERKNLIDHYEIFSFEDFSFNMFSEDRLFNKYNILDIFDYSNLYKIQDFLNNIIGINEEFESIYENDDNFHYSLKVFLNICIKDLRRCINEFYNFQWDIKIILNMHAWIVTYYTNLYIYENRKRFYNSRNKNKNNKEHQMNRDDERKCTKEYTNQNEGEMKYDHNRKREDEQKNHKYCNINCNINCNINCNKNCNKNCNINYNNGDNNVYDNNVYDNNDDYNDDYNDDYNDDYNDDYNDVNQNTYVKHNNQNENSSLFISRIQMVLGLQMYIGDNSIHSEFLCDTFQRVIREEKMMKNSSQVILCCLRCLYSDLNLLDIHSLSTDENVKSICKTSLDNLLKRNILTTLSWILQNFKILSHEKHIFIYSLKCSLLIINLLAKLGGTTYIIKEKKNIHNDSHDDNNDDSVNDSNDDTNNVNVNVNVNDYYDDDDDDNNNNNRIDKKKKHKKKKYNNEPMEKIDVSDLVEEIFNGKIVNICMHILENFKRNSLYINDLIITYFEHLIKHKNNEYNFLIFFDIKYFLIFKDIINDPEAYNNPHYYWIPCFFENIIACFFKIWKSNYFIVNELLFTKDINKNNSNLLNEKYLLSIFSNYNEGNDPFIFQQLNEGIYINDIFINLNNKKRLESLEWSNEDIENLKFYFKQFKHMHNFLPFISEMLNKSSNVVKNQLIYLNYLDKRGKVIYDDQYESDNMISSSSSSSSSSSSSSSLSSSSSLSCVSYLSEAQNSNNKSNDSLKMSYSKKKKQHTNEHMNHHQNYPMRKTKQPLLYIIYKLKKLNYNNNNNNNNNNNNNDDNTKDQPKLTVNEINCNVDTVLEEINVNLKSLYELKKLSKNKIFNNKALAFDIPLSISPDLLEHHYFKKLLKHIGFLYNQNVDEWILNENLDIDIFKKTIDKFEQLYIMDIQKLKKKLSSHKLNVQTNDQGERQDERNIDHEDEPVSSNTEDDHEENDYFTYDHIDERDHKKCDDKKYSDNTNETYDDQKCDDNTNETYDNEKCDEAINNKHMDEQELHLRSPSIKTKGTLKLLKLMYEFFISNDDECRLFFNNLINTIKEKCIIIFEKLKKCKLDHDILYKDTTNNYYDHTSHPVQICFEDYKIYLNNNEKSILKGRCKHKNILEELLEILGLYISNVPCLIISKHIKEEEFYERITTINDHKTLSLNDLNMIITTKEKEIKEKKKKKKEERKPSAHQKFAFIKSICEYLNYNYIIRNTYKSEQNTNNHNDNNIIYNNTYSKLKDTYFGDDKLLTALYDKLNIWNNRRKKKNDDMVLEIPIPQFVGSMCNVGTSEGEHEQKLDESKNIYTKEYNNDEKFLKSHINCQDDTQKISSLVIHIGICLKGEYHDESILKWTCEQIHREWMKIMLKLFYNILYDTTYNVIGKLFKEYKNIKEILNDQSSDFLDMYKSDKKKKKKKKELDDVEKEGQPKMGVGNDDNINGDKNIYDDNINGDDNINGDKNIYDDDKNIYDDDDNINGDKNIYDGNYKISYSKEYEHIHMDEKKEVEKEYHIYDNNNNNDNNNDNNNDNNNNSHTLAFQNRTQGETTFTNINNITNDICEKGNKYTSNVNNINNINEMTCKESVEVNEIIQKTNKRKFHNIELKEHYCYDLFKKRKLENTYRNTYKKNRKIIINCLLTNKNIFQYKEHDIVNKVKQIFIKAKHMATNGDLRNRWKSREDVKKILLL.

Positions 1 to 11 (MSFKNNEKYMD) are enriched in basic and acidic residues. 9 disordered regions span residues 1-56 (MSFK…NISN), 442-598 (ELES…HFSN), 774-801 (KKEK…NNNI), 1303-1357 (DSHD…KKKY), 1631-1662 (QNSN…HHQN), 1685-1705 (NNNN…KDQP), 1820-1856 (KLNV…EEND), 2317-2342 (KKKK…DNIN), and 2415-2437 (YDNN…NSHT). Residues 42–56 (NNNNNNNNNNSNISN) are compositionally biased toward low complexity. Positions 413 to 452 (YREIEENEKVMEMQRRENELLEEKKRLKQELESYHDDSST) form a coiled coil. Residues 451–462 (STDDDSSADEQQ) are compositionally biased toward acidic residues. Basic and acidic residues-rich tracts occupy residues 463–515 (DERR…KNDD) and 522–588 (DHTH…DHTH). A compositionally biased stretch (low complexity) spans 785–801 (DNNNNNNNNNNNDNNNI). A compositionally biased stretch (acidic residues) spans 1308–1318 (NNDDSVNDSND). The span at 1319-1331 (DTNNVNVNVNVND) shows a compositional bias: low complexity. A compositionally biased stretch (basic residues) spans 1347 to 1356 (DKKKKHKKKK). The span at 1631 to 1643 (QNSNNKSNDSLKM) shows a compositional bias: polar residues. The span at 1685–1698 (NNNNNNNNNNNNND) shows a compositional bias: low complexity. Residues 1828–1838 (QGERQDERNID) show a composition bias toward basic and acidic residues. The segment covering 1839-1856 (HEDEPVSSNTEDDHEEND) has biased composition (acidic residues). The segment covering 2416–2434 (DNNNNNDNNNDNNNDNNNN) has biased composition (low complexity).

This is an uncharacterized protein from Plasmodium falciparum (isolate 3D7).